Reading from the N-terminus, the 559-residue chain is Sesquiterpene synthase (559 aa).

Residues aspartate 312, aspartate 316, and glutamate 464 each contribute to the Mg(2+) site. Positions 312–316 (DDIYD) match the DDXXD motif motif.

This sequence belongs to the terpene synthase family. Tpsa subfamily. Mg(2+) serves as cofactor. It depends on Mn(2+) as a cofactor.

Functionally, catalyzes alpha-humulene and delta-cadinene, as well as beta-elemene, the thermal rearrangement product of germacrene A and several other bicyclic sesquiterpenes when incubated with (2E,6E)-farnesyl diphosphate. This Santalum austrocaledonicum (Sandalwood) protein is Sesquiterpene synthase.